A 478-amino-acid chain; its full sequence is tRNA modification GTPase MnmE (478 aa).

The (6S)-5-formyl-5,6,7,8-tetrahydrofolate site is built by R25, E82, and K135. Positions G231–G400 constitute a TrmE-type G domain. A K(+)-binding site is contributed by N241. Residues N241–S246, T260–T266, and D285–G288 each bind GTP. S245 is a binding site for Mg(2+). The K(+) site is built by T260, V262, and T265. T266 is a Mg(2+) binding site. Residue K478 participates in (6S)-5-formyl-5,6,7,8-tetrahydrofolate binding.

The protein belongs to the TRAFAC class TrmE-Era-EngA-EngB-Septin-like GTPase superfamily. TrmE GTPase family. In terms of assembly, homodimer. Heterotetramer of two MnmE and two MnmG subunits. It depends on K(+) as a cofactor.

The protein localises to the cytoplasm. Functionally, exhibits a very high intrinsic GTPase hydrolysis rate. Involved in the addition of a carboxymethylaminomethyl (cmnm) group at the wobble position (U34) of certain tRNAs, forming tRNA-cmnm(5)s(2)U34. This is tRNA modification GTPase MnmE from Polaromonas naphthalenivorans (strain CJ2).